A 102-amino-acid chain; its full sequence is Anti-lipopolysaccharide factor (102 aa).

A disulfide bridge links Cys-32 with Cys-53.

In terms of biological role, binds tightly to LPS and thus specifically inhibits the LPS-mediated activation of the hemolymph coagulation. It has a strong antibacterial effect especially on the growth of Gram-negative bacteria. This chain is Anti-lipopolysaccharide factor, found in Tachypleus tridentatus (Japanese horseshoe crab).